The primary structure comprises 236 residues: Phosphoribosylaminoimidazole-succinocarboxamide synthase (236 aa).

It belongs to the SAICAR synthetase family.

It carries out the reaction 5-amino-1-(5-phospho-D-ribosyl)imidazole-4-carboxylate + L-aspartate + ATP = (2S)-2-[5-amino-1-(5-phospho-beta-D-ribosyl)imidazole-4-carboxamido]succinate + ADP + phosphate + 2 H(+). It functions in the pathway purine metabolism; IMP biosynthesis via de novo pathway; 5-amino-1-(5-phospho-D-ribosyl)imidazole-4-carboxamide from 5-amino-1-(5-phospho-D-ribosyl)imidazole-4-carboxylate: step 1/2. This Lactococcus lactis subsp. lactis (strain IL1403) (Streptococcus lactis) protein is Phosphoribosylaminoimidazole-succinocarboxamide synthase (purC).